We begin with the raw amino-acid sequence, 140 residues long: Ctenidin-1 (140 aa).

The N-terminal stretch at 1-19 (MKHLIPLIVMASVVLAVYA) is a signal peptide. Gly-138 carries the post-translational modification Glycine amide.

It belongs to the glycine-rich peptide family. In terms of tissue distribution, expressed in hemocytes (at protein level).

Its subcellular location is the secreted. Antimicrobial protein with bacteriostatic activity against the Gram-negative bacterium E.coli, and very weak activity against the Gram-positive bacterium S.aureus. Lacks activity against the yeast C.albicans. The polypeptide is Ctenidin-1 (Cupiennius salei (American wandering spider)).